The primary structure comprises 461 residues: Hydroxyproline dehydrogenase (461 aa).

The residue at position 310 (K310) is an N6-acetyllysine.

This sequence belongs to the proline oxidase family. It depends on FAD as a cofactor.

It carries out the reaction trans-4-hydroxy-L-proline + a quinone = (3R,5S)-1-pyrroline-3-hydroxy-5-carboxylate + a quinol + H(+). It catalyses the reaction L-proline + a quinone = (S)-1-pyrroline-5-carboxylate + a quinol + H(+). It participates in amino-acid degradation; L-proline degradation into L-glutamate; L-glutamate from L-proline: step 1/2. In terms of biological role, dehydrogenase that converts trans-4-L-hydroxyproline to delta-1-pyrroline-3-hydroxy-5-carboxylate (Hyp) using ubiquinone-10 as the terminal electron acceptor. Can also use proline as a substrate but with a very much lower efficiency. Does not react with other diastereomers of Hyp: trans-4-D-hydroxyproline and cis-4-L-hydroxyproline. Ubiquininone analogs such as menadione, duroquinone and ubiquinone-1 react more efficiently than oxygen as the terminal electron acceptor during catalysis. The sequence is that of Hydroxyproline dehydrogenase from Bos taurus (Bovine).